A 326-amino-acid chain; its full sequence is Probable fructokinase-4 (326 aa).

The protein belongs to the carbohydrate kinase PfkB family.

The catalysed reaction is D-fructose + ATP = D-fructose 6-phosphate + ADP + H(+). It participates in glycan biosynthesis; starch biosynthesis. May play an important role in maintaining the flux of carbon towards starch formation. The chain is Probable fructokinase-4 from Arabidopsis thaliana (Mouse-ear cress).